We begin with the raw amino-acid sequence, 420 residues long: uncharacterized protein (420 aa).

This is an uncharacterized protein from Encephalitozoon cuniculi (strain GB-M1) (Microsporidian parasite).